We begin with the raw amino-acid sequence, 310 residues long: uncharacterized protein (310 aa).

A coiled-coil region spans residues 269–307 (DLAELERKKSLAEIHKKAAMAKKREEKKKIKQELKKSAK). Basic and acidic residues predominate over residues 290–304 (KKREEKKKIKQELKK). The segment at 290–310 (KKREEKKKIKQELKKSAKGKK) is disordered.

This is an uncharacterized protein from Magallana gigas (Pacific oyster).